Consider the following 172-residue polypeptide: Protein GrpE (172 aa).

This sequence belongs to the GrpE family. As to quaternary structure, homodimer.

It is found in the cytoplasm. In terms of biological role, participates actively in the response to hyperosmotic and heat shock by preventing the aggregation of stress-denatured proteins, in association with DnaK and GrpE. It is the nucleotide exchange factor for DnaK and may function as a thermosensor. Unfolded proteins bind initially to DnaJ; upon interaction with the DnaJ-bound protein, DnaK hydrolyzes its bound ATP, resulting in the formation of a stable complex. GrpE releases ADP from DnaK; ATP binding to DnaK triggers the release of the substrate protein, thus completing the reaction cycle. Several rounds of ATP-dependent interactions between DnaJ, DnaK and GrpE are required for fully efficient folding. The polypeptide is Protein GrpE (Thermotoga sp. (strain RQ2)).